The sequence spans 182 residues: Ribosome-recycling factor (182 aa).

It belongs to the RRF family.

The protein localises to the cytoplasm. In terms of biological role, responsible for the release of ribosomes from messenger RNA at the termination of protein biosynthesis. May increase the efficiency of translation by recycling ribosomes from one round of translation to another. This Parasynechococcus marenigrum (strain WH8102) protein is Ribosome-recycling factor.